Consider the following 251-residue polypeptide: Urease accessory protein UreF (251 aa).

Residues 1–20 are disordered; that stretch reads MAPAPDPAPAGSAAPDPASA. Residues 9–20 show a composition bias toward low complexity; sequence PAGSAAPDPASA.

This sequence belongs to the UreF family. In terms of assembly, ureD, UreF and UreG form a complex that acts as a GTP-hydrolysis-dependent molecular chaperone, activating the urease apoprotein by helping to assemble the nickel containing metallocenter of UreC. The UreE protein probably delivers the nickel.

Its subcellular location is the cytoplasm. In terms of biological role, required for maturation of urease via the functional incorporation of the urease nickel metallocenter. This Paracidovorax citrulli (strain AAC00-1) (Acidovorax citrulli) protein is Urease accessory protein UreF.